The following is a 434-amino-acid chain: Adenylosuccinate synthetase (434 aa).

Residues 13 to 19 (GDEGKGK) and 41 to 43 (GHT) contribute to the GTP site. D14 functions as the Proton acceptor in the catalytic mechanism. Mg(2+) contacts are provided by D14 and G41. Residues 14-17 (DEGK), 39-42 (NAGH), T133, R147, Q228, T243, and R307 contribute to the IMP site. The Proton donor role is filled by H42. 303–309 (STTGRKR) contacts substrate. GTP-binding positions include R309, 335-337 (KID), and 417-419 (STG).

It belongs to the adenylosuccinate synthetase family. As to quaternary structure, homodimer. Mg(2+) serves as cofactor.

The protein resides in the cytoplasm. The catalysed reaction is IMP + L-aspartate + GTP = N(6)-(1,2-dicarboxyethyl)-AMP + GDP + phosphate + 2 H(+). The protein operates within purine metabolism; AMP biosynthesis via de novo pathway; AMP from IMP: step 1/2. Its function is as follows. Plays an important role in the de novo pathway of purine nucleotide biosynthesis. Catalyzes the first committed step in the biosynthesis of AMP from IMP. This is Adenylosuccinate synthetase from Wigglesworthia glossinidia brevipalpis.